Here is a 283-residue protein sequence, read N- to C-terminus: Short-chain dehydrogenase cctT (283 aa).

Residues 1-20 (MLKTVLITGCSHGGLGAAMA) form the signal peptide. NADP(+)-binding residues include Ile7, Thr33, Lys39, Glu55, and Asn83. Asn131 is a glycosylation site (N-linked (GlcNAc...) asparagine). Ser133 (proton donor) is an active-site residue. The NADP(+) site is built by Tyr147, Arg151, Val180, and Thr182. The Proton acceptor role is filled by Tyr147.

It belongs to the short-chain dehydrogenases/reductases (SDR) family.

Functionally, short-chain dehydrogenase; part of the gene cluster that mediates the biosynthesis of the mycotoxin cyclochlorotine, a hepatotoxic and carcinogenic cyclic chlorinated pentapeptide. The function of cctT within the pathway, if any, remains undetermined. The NRPS cctN initially catalyzes the condensation of L-serine (Ser), Pro, L-2-aminobutyrate (2Abu), Ser, and beta-Phe in this order to produce isocyclotine. After the dichlorination of Pro2 catalyzed by cctP2 to produce isocyclochlorotine, the cctO-mediated transacylation of isocyclochlorotine can furnish cyclochlorotine. The subsequent hydroxylation of cyclochlorotine by cctR yields hydroxycyclochlorotine as the final product. CctP1 probably acts as a phenylalanine aminomutase and provides the uncommon building block beta-Phe. Furthermore, 2Abu can be synthesized from threonine by one of the threonine dehydratases and transaminases localized outside of the cluster. The functions of the remaining proteins encoded by the cluster, cctM and cctT, have not been identified yet. This chain is Short-chain dehydrogenase cctT, found in Talaromyces islandicus (Penicillium islandicum).